Here is a 521-residue protein sequence, read N- to C-terminus: Small ribosomal subunit protein mL104 (rPPR9) (521 aa).

A mitochondrion-targeting transit peptide spans methionine 1–phenylalanine 59. PPR repeat units follow at residues glycine 174–aspartate 204, aspartate 210–glutamate 240, aspartate 244–isoleucine 278, glycine 279–methionine 313, asparagine 321–proline 355, aspartate 356–glutamate 390, asparagine 393–proline 427, and glycine 428–valine 462. A compositionally biased stretch (basic and acidic residues) spans glutamate 480–threonine 495. Residues glutamate 480–lysine 499 form a disordered region. Residues lysine 486–lysine 503 carry the Nuclear localization signal motif.

It belongs to the PPR family. P subfamily. Interacts with NAP1;1 and TCP8. Able to bind mitochondrial RNA in vitro. Component of the mitochondrial ribosome small subunit. Expressed in root tips, lateral root primordia and leaf primordia. Highly detected in the mature pollen grains.

Its subcellular location is the mitochondrion matrix. It is found in the nucleus. Its function is as follows. RNA-binding protein that functions in both mitochondrion and nucleus. In mitochondrion, it is associated with polysomes and may play a role in translation. Required during embryogenesis. In nucleus, might be involved in the regulation of its own gene expression. The sequence is that of Small ribosomal subunit protein mL104 (rPPR9) (PNM1) from Arabidopsis thaliana (Mouse-ear cress).